The following is a 443-amino-acid chain: Porin D (443 aa).

The first 23 residues, 1-23 (MKVMKWSAIALAVSAGSTQFAVA), serve as a signal peptide directing secretion. Residues His-179, Asp-231, and Ser-319 contribute to the active site.

It belongs to the outer membrane porin (Opr) (TC 1.B.25) family.

The protein resides in the cell outer membrane. Functionally, porin with a specificity for basic amino acids. Involved in facilitated diffusion of carbapenem beta-lactam antibiotics, such as imipenem and meropenem. Also possesses serine protease activity. This Pseudomonas aeruginosa (strain ATCC 15692 / DSM 22644 / CIP 104116 / JCM 14847 / LMG 12228 / 1C / PRS 101 / PAO1) protein is Porin D (oprD).